The sequence spans 331 residues: L-lactate dehydrogenase A chain (331 aa).

NAD(+) is bound by residues Gly-29–Lys-57 and Arg-98. Substrate is bound by residues Arg-105, Asn-137, and Arg-168. Asn-137 is a binding site for NAD(+). His-192 acts as the Proton acceptor in catalysis. Thr-247 contributes to the substrate binding site.

It belongs to the LDH/MDH superfamily. LDH family. Homotetramer.

The protein resides in the cytoplasm. The catalysed reaction is (S)-lactate + NAD(+) = pyruvate + NADH + H(+). Its pathway is fermentation; pyruvate fermentation to lactate; (S)-lactate from pyruvate: step 1/1. Functionally, interconverts simultaneously and stereospecifically pyruvate and lactate with concomitant interconversion of NADH and NAD(+). The sequence is that of L-lactate dehydrogenase A chain (ldha) from Dissostichus eleginoides (Patagonian toothfish).